The following is a 490-amino-acid chain: Cytochrome P450 2C8 (490 aa).

Residues Ser-100, Asn-204, and Arg-241 each contribute to the substrate site. Ser-100 bears the Phosphoserine mark. Cys-435 is a heme binding site.

This sequence belongs to the cytochrome P450 family. The cofactor is heme.

The protein resides in the endoplasmic reticulum membrane. Its subcellular location is the microsome membrane. The enzyme catalyses an organic molecule + reduced [NADPH--hemoprotein reductase] + O2 = an alcohol + oxidized [NADPH--hemoprotein reductase] + H2O + H(+). It catalyses the reaction (5Z,8Z,11Z,14Z)-eicosatetraenoate + reduced [NADPH--hemoprotein reductase] + O2 = (11R,12S)-epoxy-(5Z,8Z,14Z)-eicosatrienoate + oxidized [NADPH--hemoprotein reductase] + H2O + H(+). The catalysed reaction is (5Z,8Z,11Z,14Z)-eicosatetraenoate + reduced [NADPH--hemoprotein reductase] + O2 = (11S,12R)-epoxy-(5Z,8Z,14Z)-eicosatrienoate + oxidized [NADPH--hemoprotein reductase] + H2O + H(+). It carries out the reaction (5Z,8Z,11Z,14Z)-eicosatetraenoate + reduced [NADPH--hemoprotein reductase] + O2 = (14R,15S)-epoxy-(5Z,8Z,11Z)-eicosatrienoate + oxidized [NADPH--hemoprotein reductase] + H2O + H(+). The enzyme catalyses (5Z,8Z,11Z,14Z)-eicosatetraenoate + reduced [NADPH--hemoprotein reductase] + O2 = (14S,15R)-epoxy-(5Z,8Z,11Z)-eicosatrienoate + oxidized [NADPH--hemoprotein reductase] + H2O + H(+). It catalyses the reaction (5Z,8Z,11Z,14Z,17Z)-eicosapentaenoate + reduced [NADPH--hemoprotein reductase] + O2 = 11,12-epoxy-(5Z,8Z,14Z,17Z)-eicosatetraenoate + oxidized [NADPH--hemoprotein reductase] + H2O + H(+). The catalysed reaction is (5Z,8Z,11Z,14Z,17Z)-eicosapentaenoate + reduced [NADPH--hemoprotein reductase] + O2 = 14,15-epoxy-(5Z,8Z,11Z,17Z)-eicosatetraenoate + oxidized [NADPH--hemoprotein reductase] + H2O + H(+). It carries out the reaction (5Z,8Z,11Z,14Z,17Z)-eicosapentaenoate + reduced [NADPH--hemoprotein reductase] + O2 = (17R,18S)-epoxy-(5Z,8Z,11Z,14Z)-eicosatetraenoate + oxidized [NADPH--hemoprotein reductase] + H2O + H(+). The enzyme catalyses (5Z,8Z,11Z,14Z,17Z)-eicosapentaenoate + reduced [NADPH--hemoprotein reductase] + O2 = (17S,18R)-epoxy-(5Z,8Z,11Z,14Z)-eicosatetraenoate + oxidized [NADPH--hemoprotein reductase] + H2O + H(+). It catalyses the reaction (4Z,7Z,10Z,13Z,16Z,19Z)-docosahexaenoate + reduced [NADPH--hemoprotein reductase] + O2 = (19R,20S)-epoxy-(4Z,7Z,10Z,13Z,16Z)-docosapentaenoate + oxidized [NADPH--hemoprotein reductase] + H2O + H(+). The catalysed reaction is (4Z,7Z,10Z,13Z,16Z,19Z)-docosahexaenoate + reduced [NADPH--hemoprotein reductase] + O2 = (19S,20R)-epoxy-(4Z,7Z,10Z,13Z,16Z)-docosapentaenoate + oxidized [NADPH--hemoprotein reductase] + H2O + H(+). It carries out the reaction all-trans-retinoate + reduced [NADPH--hemoprotein reductase] + O2 = all-trans-4-hydroxyretinoate + oxidized [NADPH--hemoprotein reductase] + H2O + H(+). The enzyme catalyses 17beta-estradiol + reduced [NADPH--hemoprotein reductase] + O2 = 16alpha,17beta-estriol + oxidized [NADPH--hemoprotein reductase] + H2O + H(+). It catalyses the reaction estrone + reduced [NADPH--hemoprotein reductase] + O2 = 16alpha-hydroxyestrone + oxidized [NADPH--hemoprotein reductase] + H2O + H(+). It participates in steroid metabolism. The protein operates within lipid metabolism; arachidonate metabolism. Its pathway is cofactor metabolism; retinol metabolism. A cytochrome P450 monooxygenase involved in the metabolism of various endogenous substrates, including fatty acids, steroid hormones and vitamins. Mechanistically, uses molecular oxygen inserting one oxygen atom into a substrate, and reducing the second into a water molecule, with two electrons provided by NADPH via cytochrome P450 reductase (NADPH--hemoprotein reductase). Primarily catalyzes the epoxidation of double bonds of polyunsaturated fatty acids (PUFA) with a preference for the last double bond. Catalyzes the hydroxylation of carbon-hydrogen bonds. Metabolizes all trans-retinoic acid toward its 4-hydroxylated form. Displays 16-alpha hydroxylase activity toward estrogen steroid hormones, 17beta-estradiol (E2) and estrone (E1). Plays a role in the oxidative metabolism of xenobiotics. It is the principal enzyme responsible for the metabolism of the anti-cancer drug paclitaxel (taxol). The polypeptide is Cytochrome P450 2C8 (Homo sapiens (Human)).